A 490-amino-acid polypeptide reads, in one-letter code: Acetyl-coenzyme A carboxylase carboxyl transferase subunit beta, chloroplastic (490 aa).

Residues 221–490 (LWVQCENCYG…PLNQKSSKIK (270 aa)) enclose the CoA carboxyltransferase N-terminal domain. Zn(2+)-binding residues include cysteine 225, cysteine 228, cysteine 244, and cysteine 247. The segment at 225-247 (CENCYGLNYKKFLKSKMNICEQC) adopts a C4-type zinc-finger fold.

This sequence belongs to the AccD/PCCB family. As to quaternary structure, acetyl-CoA carboxylase is a heterohexamer composed of biotin carboxyl carrier protein, biotin carboxylase and 2 subunits each of ACCase subunit alpha and ACCase plastid-coded subunit beta (accD). The cofactor is Zn(2+). Expressed in leaves, ripening and mature fruit.

It localises to the plastid. The protein localises to the chloroplast stroma. It is found in the chromoplast stroma. The catalysed reaction is N(6)-carboxybiotinyl-L-lysyl-[protein] + acetyl-CoA = N(6)-biotinyl-L-lysyl-[protein] + malonyl-CoA. It functions in the pathway lipid metabolism; malonyl-CoA biosynthesis; malonyl-CoA from acetyl-CoA: step 1/1. Its function is as follows. Component of the acetyl coenzyme A carboxylase (ACC) complex. Biotin carboxylase (BC) catalyzes the carboxylation of biotin on its carrier protein (BCCP) and then the CO(2) group is transferred by the transcarboxylase to acetyl-CoA to form malonyl-CoA. Is up-regulated upon chromoplast differentiation, presumably for fatty acid biosynthesis. This is Acetyl-coenzyme A carboxylase carboxyl transferase subunit beta, chloroplastic from Solanum lycopersicum (Tomato).